The sequence spans 1014 residues: Regulator of telomere elongation helicase 1 homolog (1014 aa).

The Helicase ATP-binding domain occupies 7–324 (AGIPVHFPFE…KEMLLELEKA (318 aa)). 42-49 (SPTGTGKT) provides a ligand contact to ATP. Residues C147, C165, C174, and C210 each coordinate [4Fe-4S] cluster. Residues 253–256 (DEAH) carry the DEAH box motif. T873 carries the phosphothreonine modification. Residues 891–917 (TDMVKTEPGTSNSCSYGNTSSSGSDSR) are disordered. Low complexity predominate over residues 899-917 (GTSNSCSYGNTSSSGSDSR).

Belongs to the helicase family. RAD3/XPD subfamily.

The protein resides in the nucleus. It carries out the reaction ATP + H2O = ADP + phosphate + H(+). Functionally, a probable ATP-dependent DNA helicase implicated in DNA repair and the maintenance of genomic stability. Acts as an anti-recombinase to counteract toxic recombination and limit crossover during meiosis. Regulates meiotic recombination and crossover homeostasis by physically dissociating strand invasion events and thereby promotes noncrossover repair by meiotic synthesis dependent strand annealing (SDSA) as well as disassembly of D loop recombination intermediates. This chain is Regulator of telomere elongation helicase 1 homolog, found in Drosophila mojavensis (Fruit fly).